The primary structure comprises 151 residues: Putative pre-16S rRNA nuclease (151 aa).

Belongs to the YqgF nuclease family.

Its subcellular location is the cytoplasm. Its function is as follows. Could be a nuclease involved in processing of the 5'-end of pre-16S rRNA. The sequence is that of Putative pre-16S rRNA nuclease from Paraburkholderia phymatum (strain DSM 17167 / CIP 108236 / LMG 21445 / STM815) (Burkholderia phymatum).